The chain runs to 148 residues: MYFAIRLSFVLAVLFCLTGNGSARMLDADRNRLQQLQIRSQQSADANTQVDIAYEVIGIYDKYKGQGGSNVLREAQLNSQVNDFKRKTMVIDGVPAQGGVWGILGAIKKAADAVPDNVKKDAENLVKSSTKVLVRGIYDYLMGKMKQH.

The N-terminal stretch at 1–23 (MYFAIRLSFVLAVLFCLTGNGSA) is a signal peptide.

This sequence belongs to the Turandot family.

It localises to the secreted. A humoral factor that may play a role in stress tolerance. The protein is Protein Turandot Z of Drosophila simulans (Fruit fly).